The following is a 555-amino-acid chain: uncharacterized protein (555 aa).

5 helical membrane passes run 13-30 (ALQA…GLGL), 35-57 (FWGV…HFGL), 72-91 (LVIF…FSSF), 98-120 (LNML…SYAT), and 157-179 (TPAL…AVLL). 2 consecutive RCK C-terminal domains span residues 188–273 (EDLE…LFGE) and 282–366 (KEDI…VLGN). 6 helical membrane-spanning segments follow: residues 376 to 398 (LVVI…SIPG), 408 to 430 (AGGP…MITY), 437 to 459 (LMLR…GAHF), 469 to 491 (LLWI…FVAF), 498 to 517 (FGSV…ALNY), and 532 to 554 (ATVY…MFLL).

The protein belongs to the AAE transporter (TC 2.A.81) family.

It localises to the cell membrane. This is an uncharacterized protein from Bacteroides thetaiotaomicron (strain ATCC 29148 / DSM 2079 / JCM 5827 / CCUG 10774 / NCTC 10582 / VPI-5482 / E50).